Reading from the N-terminus, the 156-residue chain is CRIB domain-containing protein RIC10 (156 aa).

Residues 30-43 (IGFPTDVKHVAHIG) form the CRIB domain. Residues 68-77 (RPSSFSNARP) show a composition bias toward polar residues. The disordered stretch occupies residues 68–156 (RPSSFSNARP…SYKSTVSRLI (89 aa)). Over residues 78–96 (STSFFTSSSSTDFDQGSSQ) the composition is skewed to low complexity. Over residues 117–128 (NNKKKSSRRKKS) the composition is skewed to basic residues. The segment covering 129-156 (SSSSSSPKSSRSSVLSKSSYKSTVSRLI) has biased composition (low complexity).

As to expression, expressed in roots, leaves, flowers and pollen.

It localises to the cytoplasm. Its function is as follows. Functions as a downstream effector of Rho-related GTP binding proteins of the 'Rho of Plants' (ROPs) family. Participates in the propagation of ROP GTPase signals in specific cellular responses. Is involved in pollen tube growth regulation. The polypeptide is CRIB domain-containing protein RIC10 (RIC10) (Arabidopsis thaliana (Mouse-ear cress)).